The following is a 191-amino-acid chain: Corticoliberin (191 aa).

An N-terminal signal peptide occupies residues 1–24; sequence MRLPLLVSAGVLLVALLPCPPCRA. The propeptide occupies 25–148; that stretch reads LLSRGPVLGA…RQEAPERERR (124 aa). The interval 115 to 153 is disordered; sequence PLPRRPLDSPSGPAERGAENALSSRQEAPERERRSEEPP. Positions 141-151 are enriched in basic and acidic residues; sequence EAPERERRSEE. An Isoleucine amide modification is found at Ile-189.

Belongs to the sauvagine/corticotropin-releasing factor/urotensin I family. Interacts (via C-terminus) with CRFR1 (via N-terminal extracellular domain). As to expression, produced by the hypothalamus.

The protein localises to the secreted. Its function is as follows. Hormone regulating the release of corticotropin from pituitary gland. Induces NLRP6 in intestinal epithelial cells, hence may influence gut microbiota profile. This Sus scrofa (Pig) protein is Corticoliberin (CRH).